The primary structure comprises 435 residues: Probable xyloglucan galactosyltransferase GT19 (435 aa).

At 1–6 the chain is on the cytoplasmic side; it reads MASKST. A helical; Signal-anchor for type II membrane protein membrane pass occupies residues 7–23; it reads VTTLTIFFFFFFFFIEP. At 24 to 435 the chain is on the lumenal side; sequence KVQSQQISAV…GVLDRIISRV (412 aa). Asparagine 140, asparagine 203, and asparagine 277 each carry an N-linked (GlcNAc...) asparagine glycan.

It belongs to the glycosyltransferase 47 family. In terms of tissue distribution, expressed in roots, hypocotyls, cotyledons, leaves, stems, stamens and pollen grains.

The protein resides in the golgi apparatus membrane. Its function is as follows. Functions in xyloglucan synthesis by adding side chains to the xylosylated glucan backbone. Involved in the galactosylation of hemicellulose xyloglucan. The polypeptide is Probable xyloglucan galactosyltransferase GT19 (Arabidopsis thaliana (Mouse-ear cress)).